The chain runs to 81 residues: MSHTVKIYDTCIGCTQCVRACPTDVLEMIPWDGCKANQIASSPRTEDCVGCKRCESACPTDFLSVRVYLGSETTRSMGLAY.

2 consecutive 4Fe-4S ferredoxin-type domains span residues 2 to 31 (SHTV…MIPW) and 39 to 68 (IASS…VRVY). Residues C11, C14, C17, C21, C48, C51, C54, and C58 each coordinate [4Fe-4S] cluster.

In terms of assembly, the eukaryotic PSI reaction center is composed of at least 11 subunits. The cofactor is [4Fe-4S] cluster.

It is found in the plastid. The protein resides in the chloroplast thylakoid membrane. The catalysed reaction is reduced [plastocyanin] + hnu + oxidized [2Fe-2S]-[ferredoxin] = oxidized [plastocyanin] + reduced [2Fe-2S]-[ferredoxin]. Its function is as follows. Apoprotein for the two 4Fe-4S centers FA and FB of photosystem I (PSI); essential for photochemical activity. FB is the terminal electron acceptor of PSI, donating electrons to ferredoxin. The C-terminus interacts with PsaA/B/D and helps assemble the protein into the PSI complex. Required for binding of PsaD and PsaE to PSI. PSI is a plastocyanin-ferredoxin oxidoreductase, converting photonic excitation into a charge separation, which transfers an electron from the donor P700 chlorophyll pair to the spectroscopically characterized acceptors A0, A1, FX, FA and FB in turn. This chain is Photosystem I iron-sulfur center, found in Chaetosphaeridium globosum (Charophycean green alga).